Here is a 405-residue protein sequence, read N- to C-terminus: L-carnitine CoA-transferase (405 aa).

CoA contacts are provided by K97 and R104. D169 functions as the Nucleophile in the catalytic mechanism.

The protein belongs to the CoA-transferase III family. CaiB subfamily. In terms of assembly, homodimer.

The protein resides in the cytoplasm. The enzyme catalyses crotonobetainyl-CoA + (R)-carnitine = crotonobetaine + (R)-carnitinyl-CoA. It carries out the reaction 4-(trimethylamino)butanoyl-CoA + (R)-carnitine = (R)-carnitinyl-CoA + 4-(trimethylamino)butanoate. The protein operates within amine and polyamine metabolism; carnitine metabolism. Functionally, catalyzes the reversible transfer of the CoA moiety from gamma-butyrobetainyl-CoA to L-carnitine to generate L-carnitinyl-CoA and gamma-butyrobetaine. Is also able to catalyze the reversible transfer of the CoA moiety from gamma-butyrobetainyl-CoA or L-carnitinyl-CoA to crotonobetaine to generate crotonobetainyl-CoA. The chain is L-carnitine CoA-transferase from Escherichia coli (strain K12 / MC4100 / BW2952).